We begin with the raw amino-acid sequence, 216 residues long: Small ribosomal subunit protein eS6 (216 aa).

It belongs to the eukaryotic ribosomal protein eS6 family.

This chain is Small ribosomal subunit protein eS6, found in Staphylothermus marinus (strain ATCC 43588 / DSM 3639 / JCM 9404 / F1).